A 626-amino-acid polypeptide reads, in one-letter code: Trehalase (626 aa).

2 helical membrane-spanning segments follow: residues 20-40 and 45-65; these read KLFLSSSPFNLLFSFPSFIYL and SLFFFFFFFLCFSFTTSMLDS. Residues R224, D232, N268, R277, Q279, R344, and E346 each contribute to the alpha,alpha-trehalose site. Active-site proton donor/acceptor residues include D380 and E580. E580 and E595 together coordinate alpha,alpha-trehalose.

This sequence belongs to the glycosyl hydrolase 37 family. In terms of assembly, forms homodimers. In terms of tissue distribution, highly expressed in flowers. Expressed at low levels in leaves and stems. Expressed in guard cells.

Its subcellular location is the cell membrane. The protein localises to the cytoplasm. The protein resides in the nucleus. The catalysed reaction is alpha,alpha-trehalose + H2O = alpha-D-glucose + beta-D-glucose. Its function is as follows. Involved in the regulation of trehalose content by hydrolyzing trehalose to glucose. May play a role in the regulation of abscisic acid-induced stomatal closure in response to drought stress. This Arabidopsis thaliana (Mouse-ear cress) protein is Trehalase (TRE1).